A 577-amino-acid chain; its full sequence is Urease subunit alpha (577 aa).

Positions 136–577 (GTVDCHVHLI…LPMTQRYFLF (442 aa)) constitute a Urease domain. Ni(2+) contacts are provided by H141, H143, and K224. K224 is modified (N6-carboxylysine). H226 serves as a coordination point for substrate. Ni(2+) is bound by residues H253 and H279. Catalysis depends on H327, which acts as the Proton donor. Position 367 (D367) interacts with Ni(2+).

This sequence belongs to the metallo-dependent hydrolases superfamily. Urease alpha subunit family. As to quaternary structure, heterotrimer of UreA (gamma), UreB (beta) and UreC (alpha) subunits. Three heterotrimers associate to form the active enzyme. It depends on Ni cation as a cofactor. Carboxylation allows a single lysine to coordinate two nickel ions.

It localises to the cytoplasm. The catalysed reaction is urea + 2 H2O + H(+) = hydrogencarbonate + 2 NH4(+). It participates in nitrogen metabolism; urea degradation; CO(2) and NH(3) from urea (urease route): step 1/1. This Mycobacterium bovis (strain ATCC BAA-935 / AF2122/97) protein is Urease subunit alpha.